Here is a 123-residue protein sequence, read N- to C-terminus: Class I hydrophobin pri2 (123 aa).

A signal peptide spans 1–18 (MVAIKSLAILALPVMAMA). 4 disulfides stabilise this stretch: Cys31–Cys102, Cys38–Cys96, Cys39–Cys84, and Cys103–Cys116. Residues Asn33 and Asn40 are each glycosylated (N-linked (GlcNAc...) asparagine).

This sequence belongs to the fungal hydrophobin family. Self-assembles to form functional amyloid fibrils called rodlets. Self-assembly into fibrillar rodlets occurs spontaneously at hydrophobic:hydrophilic interfaces and the rodlets further associate laterally to form amphipathic monolayers.

It localises to the secreted. Its subcellular location is the cell wall. Aerial growth, conidiation, and dispersal of filamentous fungi in the environment rely upon a capability of their secreting small amphipathic proteins called hydrophobins (HPBs) with low sequence identity. Class I can self-assemble into an outermost layer of rodlet bundles on aerial cell surfaces, conferring cellular hydrophobicity that supports fungal growth, development and dispersal; whereas Class II form highly ordered films at water-air interfaces through intermolecular interactions but contribute nothing to the rodlet structure. This Cyclocybe aegerita (Black poplar mushroom) protein is Class I hydrophobin pri2.